Here is a 283-residue protein sequence, read N- to C-terminus: Acetylglutamate kinase (283 aa).

Substrate is bound by residues 63–64, Arg-85, and Asn-178; that span reads GG.

It belongs to the acetylglutamate kinase family. ArgB subfamily.

The protein localises to the cytoplasm. It catalyses the reaction N-acetyl-L-glutamate + ATP = N-acetyl-L-glutamyl 5-phosphate + ADP. It participates in amino-acid biosynthesis; L-arginine biosynthesis; N(2)-acetyl-L-ornithine from L-glutamate: step 2/4. Functionally, catalyzes the ATP-dependent phosphorylation of N-acetyl-L-glutamate. This is Acetylglutamate kinase from Prochlorococcus marinus (strain AS9601).